The primary structure comprises 120 residues: Large ribosomal subunit protein uL18 (120 aa).

This sequence belongs to the universal ribosomal protein uL18 family. As to quaternary structure, part of the 50S ribosomal subunit; part of the 5S rRNA/L5/L18/L25 subcomplex. Contacts the 5S and 23S rRNAs.

In terms of biological role, this is one of the proteins that bind and probably mediate the attachment of the 5S RNA into the large ribosomal subunit, where it forms part of the central protuberance. This chain is Large ribosomal subunit protein uL18, found in Geobacillus thermodenitrificans (strain NG80-2).